The chain runs to 113 residues: MYGGICLCVLLAVLAISSSGQHISRSLNGNSLAAAIEQNFPEKHRPARTPDSNQRVESNIDEKANLGVLLARYLQKARRGTNGKPPDPKKESQDYLGWMDFGRRSAEEYEYSS.

The N-terminal stretch at 1–20 is a signal peptide; the sequence is MYGGICLCVLLAVLAISSSG. A propeptide spanning residues 21–79 is cleaved from the precursor; sequence QHISRSLNGNSLAAAIEQNFPEKHRPARTPDSNQRVESNIDEKANLGVLLARYLQKARR. Positions 77–97 are disordered; that stretch reads ARRGTNGKPPDPKKESQDYLG. Residue Tyr95 is modified to Sulfotyrosine. At Phe101 the chain carries Phenylalanine amide. A propeptide spanning residues 102 to 113 is cleaved from the precursor; sequence GRRSAEEYEYSS.

This sequence belongs to the gastrin/cholecystokinin family. Expressed by the mandibular venom gland.

Its subcellular location is the secreted. Cholecystokinin-22: hypotensive neuropeptide that binds cholecystokinin receptor type A receptor (CCKAR). Its function is as follows. Cholecystokinin-8: hypotensive neuropeptide that binds cholecystokinin receptor type A receptor (CCKAR). This chain is Cholecystoxin, found in Varanus varius (Lace monitor lizard).